Here is a 160-residue protein sequence, read N- to C-terminus: Small ribosomal subunit protein uS9 (160 aa).

This sequence belongs to the universal ribosomal protein uS9 family.

The protein is Small ribosomal subunit protein uS9 of Mesorhizobium japonicum (strain LMG 29417 / CECT 9101 / MAFF 303099) (Mesorhizobium loti (strain MAFF 303099)).